The chain runs to 100 residues: Small ribosomal subunit protein uS14 (100 aa).

It belongs to the universal ribosomal protein uS14 family. Part of the 30S ribosomal subunit. Contacts proteins S3 and S10.

In terms of biological role, binds 16S rRNA, required for the assembly of 30S particles and may also be responsible for determining the conformation of the 16S rRNA at the A site. The polypeptide is Small ribosomal subunit protein uS14 (Gloeothece citriformis (strain PCC 7424) (Cyanothece sp. (strain PCC 7424))).